Consider the following 418-residue polypeptide: Zinc metalloproteinase nas-8 (418 aa).

The first 28 residues, 1-28 (MMNRASLCRIAVLLCILHLSHLIDSTYA), serve as a signal peptide directing secretion. Positions 29–100 (QSYLTEKDFL…TSKLKSGVRR (72 aa)) are excised as a propeptide. A Peptidase M12A domain is found at 101–296 (NGVTSVIKRW…LKINKLYNCP (196 aa)). 5 cysteine pairs are disulfide-bonded: Cys143–Cys295, Cys165–Cys184, Cys347–Cys381, Cys354–Cys374, and Cys361–Cys378. His192 provides a ligand contact to Zn(2+). Glu193 is an active-site residue. Zn(2+) is bound by residues His196 and His202. The region spanning 347–381 (CSDRTNLCWRWLDRCRSYFFEKIMKEFCALSCGYC) is the ShKT domain.

Requires Zn(2+) as cofactor.

It localises to the secreted. The catalysed reaction is Hydrolysis of peptide bonds in substrates containing five or more amino acids, preferentially with Ala in P1', and Pro in P2'.. With respect to regulation, inhibited by ethylene glycol-bis(2-aminoethylether)-N,N,N,N-tetraacetic acid (EGTA), ethylenediaminetetraacetic acid (EDTA) and o-phenanthroline. In terms of biological role, metalloprotease. This chain is Zinc metalloproteinase nas-8, found in Steinernema carpocapsae (Entomopathogenic nematode).